We begin with the raw amino-acid sequence, 134 residues long: Kinetochore-binding protein 3 (134 aa).

The protein resides in the nucleus. It localises to the chromosome. Its subcellular location is the centromere. The protein localises to the kinetochore. The sequence is that of Kinetochore-binding protein 3 (kbp-3) from Caenorhabditis elegans.